Consider the following 386-residue polypeptide: Succinate--CoA ligase [ADP-forming] subunit beta (386 aa).

The ATP-grasp domain occupies 9 to 244 (KELLKQFGVP…LDEEDPAEIE (236 aa)). ATP-binding positions include K46, 53-55 (GRG), E99, A102, and E107. Mg(2+) is bound by residues N199 and D213. Substrate-binding positions include N264 and 321-323 (GIM).

The protein belongs to the succinate/malate CoA ligase beta subunit family. Heterotetramer of two alpha and two beta subunits. Requires Mg(2+) as cofactor.

It carries out the reaction succinate + ATP + CoA = succinyl-CoA + ADP + phosphate. It catalyses the reaction GTP + succinate + CoA = succinyl-CoA + GDP + phosphate. Its pathway is carbohydrate metabolism; tricarboxylic acid cycle; succinate from succinyl-CoA (ligase route): step 1/1. Functionally, succinyl-CoA synthetase functions in the citric acid cycle (TCA), coupling the hydrolysis of succinyl-CoA to the synthesis of either ATP or GTP and thus represents the only step of substrate-level phosphorylation in the TCA. The beta subunit provides nucleotide specificity of the enzyme and binds the substrate succinate, while the binding sites for coenzyme A and phosphate are found in the alpha subunit. This chain is Succinate--CoA ligase [ADP-forming] subunit beta, found in Bordetella petrii (strain ATCC BAA-461 / DSM 12804 / CCUG 43448).